The following is a 241-amino-acid chain: Endodeoxyribonuclease NucC (241 aa).

Active-site residues include D73, E104, and K106. Mg(2+) contacts are provided by D73 and E104.

It belongs to the NucC endonuclease family. Self-oligomerizes. Forms homotrimers; in the presence of cAAA the trimers associate face-to-face to form homohexamers. The 2 cAAA-binding sites are on the exterior of the hexamer at the three-way junction, there are maximally 2 cyclic nucleotides per hexamer. Mg(2+) serves as cofactor.

With respect to regulation, activated by cAAA and to a lesser extent cAA; both cyclic nucleotides are products of its cognate CD-NTase. Cyclic nucleotide binding causes hexamerization. Its function is as follows. Effector DNase of a CBASS antivirus system. CBASS (cyclic oligonucleotide-based antiphage signaling system) provides immunity against bacteriophage. The CD-NTase protein synthesizes cyclic nucleotides in response to infection; these serve as specific second messenger signals. The signals activate a diverse range of effectors, leading to bacterial cell death and thus abortive phage infection. A type III-C(AAA) CBASS system. A cyclic nucleotide-activated dsDNase. In the presence of 3',3',3'-cyclic AMP-AMP-AMP (cAAA) and to a lesser extent cyclic-di-AMP (c-di-AMP), endonucleolytically degrades dsDNA. Binds one cAAA in a pocket on one surface of the trimer; cAAA binding promotes hexamerization which is probably necessary for nuclease activation. The nuclease digests dsDNA to about 50 bp lengths. DNA has been modeled to contact a pair of juxtaposed active sites (one from each layer of the hexamer), accounting for cleavage on both strands. The sequence is that of Endodeoxyribonuclease NucC from Pseudomonas aeruginosa.